The chain runs to 107 residues: Polyketide synthase CurG (107 aa).

It functions in the pathway antibiotic biosynthesis; curamycin biosynthesis. This is Polyketide synthase CurG (curG) from Streptomyces cyaneus (Streptomyces curacoi).